The chain runs to 263 residues: MALPDFSMRQLLEAGVHFGHQTHRWNPRMKPYIYGERSGIHIMDLSHTVPALHQSLVFVRDTVAKGGRVLFVGTKRQAQEPVAEAAQRCAQYYMNHRWLGGTLTNWSTVSNSIKQLRELNAMFESGGGSGLTKKELLDLQRRRDKLQKSLGGIADMGGLPAAIVVIDTNKEAIAVQEARKLGIPVVAVLDTNCNPSDADFGFPGNDDAARAISLYCNLFADAVLDGLAESTAGLGVDLGASADIASLADADVKLADEEAAGEA.

The protein belongs to the universal ribosomal protein uS2 family.

The chain is Small ribosomal subunit protein uS2 from Hyphomonas neptunium (strain ATCC 15444).